Here is an 81-residue protein sequence, read N- to C-terminus: uncharacterized protein (81 aa).

The tract at residues 46–81 is disordered; sequence ASSPVVKRKSLVKRKSPVKRSPLKKRSQMRTSPCEA. Basic residues predominate over residues 51–73; that stretch reads VKRKSLVKRKSPVKRSPLKKRSQ.

This is an uncharacterized protein from Frog virus 3 (isolate Goorha) (FV-3).